The primary structure comprises 208 residues: Probable GTP-binding protein EngB (208 aa).

One can recognise an EngB-type G domain in the interval 23–205; it reads LTSEMVILGR…RQTLLKYLLT (183 aa). Residues 31 to 38, 57 to 61, 84 to 87, 154 to 157, and 182 to 184 contribute to the GTP site; these read GRSNVGKS, GKTRL, DLPG, TKFD, and FNA. The Mg(2+) site is built by S38 and T59.

It belongs to the TRAFAC class TrmE-Era-EngA-EngB-Septin-like GTPase superfamily. EngB GTPase family. The cofactor is Mg(2+).

In terms of biological role, necessary for normal cell division and for the maintenance of normal septation. This is Probable GTP-binding protein EngB from Helicobacter pylori (strain G27).